The sequence spans 370 residues: 3-isopropylmalate dehydrogenase (370 aa).

77–90 (GAKWDGVPYEARPE) is a binding site for NAD(+). Residues R97, R107, R135, and D226 each contribute to the substrate site. Mg(2+) contacts are provided by D226, D250, and D254. Residue 290–302 (GSAPDIAGKGLAN) coordinates NAD(+).

It belongs to the isocitrate and isopropylmalate dehydrogenases family. LeuB type 1 subfamily. Homodimer. Mg(2+) is required as a cofactor. Requires Mn(2+) as cofactor.

The protein localises to the cytoplasm. It catalyses the reaction (2R,3S)-3-isopropylmalate + NAD(+) = 4-methyl-2-oxopentanoate + CO2 + NADH. It functions in the pathway amino-acid biosynthesis; L-leucine biosynthesis; L-leucine from 3-methyl-2-oxobutanoate: step 3/4. Catalyzes the oxidation of 3-carboxy-2-hydroxy-4-methylpentanoate (3-isopropylmalate) to 3-carboxy-4-methyl-2-oxopentanoate. The product decarboxylates to 4-methyl-2 oxopentanoate. The sequence is that of 3-isopropylmalate dehydrogenase from Rhodopseudomonas palustris (strain BisB18).